The primary structure comprises 162 residues: NADH-quinone oxidoreductase subunit I (162 aa).

4Fe-4S ferredoxin-type domains lie at 54 to 83 (RRYE…IESE) and 93 to 122 (TRYD…ETQI). Residues Cys63, Cys66, Cys69, Cys73, Cys102, Cys105, Cys108, and Cys112 each coordinate [4Fe-4S] cluster.

Belongs to the complex I 23 kDa subunit family. NDH-1 is composed of 14 different subunits. Subunits NuoA, H, J, K, L, M, N constitute the membrane sector of the complex. Requires [4Fe-4S] cluster as cofactor.

The protein localises to the cell inner membrane. The enzyme catalyses a quinone + NADH + 5 H(+)(in) = a quinol + NAD(+) + 4 H(+)(out). NDH-1 shuttles electrons from NADH, via FMN and iron-sulfur (Fe-S) centers, to quinones in the respiratory chain. The immediate electron acceptor for the enzyme in this species is believed to be ubiquinone. Couples the redox reaction to proton translocation (for every two electrons transferred, four hydrogen ions are translocated across the cytoplasmic membrane), and thus conserves the redox energy in a proton gradient. This is NADH-quinone oxidoreductase subunit I from Burkholderia vietnamiensis (strain G4 / LMG 22486) (Burkholderia cepacia (strain R1808)).